The primary structure comprises 481 residues: 2-methylisoborneol synthase (481 aa).

2 disordered regions span residues 1-125 (MPDS…PVGP) and 139-160 (QAAV…GPVV). Residues 11 to 23 (TSLPEQPPAPPAT) show a composition bias toward pro residues. The segment covering 24–33 (APDAPAATVT) has biased composition (low complexity). Pro residues-rich tracts occupy residues 52–64 (VTRP…PSMP) and 71–104 (SSPP…PPAT). Residues 105–114 (APETSAATGS) are compositionally biased toward low complexity. The Mg(2+) site is built by D238, D239, E243, N386, S390, and E394.

The protein belongs to the terpene synthase family. 2-methylisoborneol synthase subfamily. Mg(2+) serves as cofactor.

It catalyses the reaction (E)-2-methylgeranyl diphosphate + H2O = 2-methylisoborneol + diphosphate. Functionally, catalyzes the cyclization of 2-methylgeranyl diphosphate (2-MeGPP) to 2-methylisoborneol (2-MIB), which likely involves the intermediacy of 2-methyllinalyl diphosphate. This Streptomyces lasalocidi (Streptomyces lasaliensis) protein is 2-methylisoborneol synthase (tpc).